The primary structure comprises 327 residues: G-protein coupled receptor 55 (327 aa).

Topologically, residues 1–20 (MSQPERDNCSFDSVDKLTRT) are extracellular. Asn-8 is a glycosylation site (N-linked (GlcNAc...) asparagine). A helical membrane pass occupies residues 21 to 41 (LQLAVHIPTFLLGLVLNLLAI). Residues 42-57 (RGFSAFLKKRKLDYIA) lie on the Cytoplasmic side of the membrane. Residues 58–78 (TSIYMINLAVFDLLLVLSLPF) form a helical membrane-spanning segment. The Extracellular portion of the chain corresponds to 79–93 (KMVLPQVESPLPSFC). Residues 94-114 (TLVECLYFISMYGSVFTICFI) traverse the membrane as a helical segment. Residues 115 to 136 (SLDRFLAIQYPILASHLRSPRK) lie on the Cytoplasmic side of the membrane. The helical transmembrane segment at 137–157 (TFGICCIIWMLVWIGSIPIYT) threads the bilayer. At 158–179 (FHREVERYKCFHNMSDVTWSAS) the chain is on the extracellular side. Residue Asn-170 is glycosylated (N-linked (GlcNAc...) asparagine). The helical transmembrane segment at 180–200 (VFFPLEIFGFLLPMGIMGFCS) threads the bilayer. Residues 201–239 (YRSIHILLRRPDSTEDWVQQRDTKGWVQKRACIWTIATN) lie on the Cytoplasmic side of the membrane. Residues 240 to 260 (LVIFVVSFLPVHLGFFLQYLV) form a helical membrane-spanning segment. Residues 261-279 (RNRFILDCRMKQGISLFLQ) lie on the Extracellular side of the membrane. A helical membrane pass occupies residues 280-300 (LSLCFSNINCCLDVFCYYFVI). Over 301 to 327 (KEFRMRIKAHRPSTIKLVNQDTMVSRG) the chain is Cytoplasmic.

Belongs to the G-protein coupled receptor 1 family. In terms of tissue distribution, highly expressed in splenic plasma cells.

Its subcellular location is the cell membrane. In terms of biological role, G-protein coupled receptor that binds to several ligands including 2-arachidonoyl lysophosphatidylinositol or lysophosphatidylglucoside with high affinity, leading to rapid and transient activation of numerous intracellular signaling pathways. Induces the Ca(2+) release from intracellular stores via ERK, the heterotrimeric G protein GNA13 and RHOA leading to morphological changes including cell rounding and stress fiber formation. In macrophages, acts downstream of lysophosphatidylglucoside to inhibit the translocation of the phospholipid-transporting ABCA1 to plasma membrane and subsequent cholesterol efflux leading to lipid accumulation and foam cell formation. May be involved in hyperalgesia associated with inflammatory and neuropathic pain. In Mus musculus (Mouse), this protein is G-protein coupled receptor 55 (Gpr55).